A 220-amino-acid polypeptide reads, in one-letter code: Protein-L-isoaspartate O-methyltransferase (220 aa).

Ser68 is an active-site residue.

Belongs to the methyltransferase superfamily. L-isoaspartyl/D-aspartyl protein methyltransferase family.

The protein resides in the cytoplasm. The enzyme catalyses [protein]-L-isoaspartate + S-adenosyl-L-methionine = [protein]-L-isoaspartate alpha-methyl ester + S-adenosyl-L-homocysteine. Its function is as follows. Catalyzes the methyl esterification of L-isoaspartyl residues in peptides and proteins that result from spontaneous decomposition of normal L-aspartyl and L-asparaginyl residues. It plays a role in the repair and/or degradation of damaged proteins. The chain is Protein-L-isoaspartate O-methyltransferase from Dictyoglomus turgidum (strain DSM 6724 / Z-1310).